An 812-amino-acid polypeptide reads, in one-letter code: ISWI one complex protein 2 (812 aa).

4 disordered regions span residues 1–21 (MRTK…AGAA), 614–646 (MGNS…KRKP), 679–704 (AKQR…LEEL), and 762–812 (QTGS…PPTN). Polar residues predominate over residues 627–638 (PQSTLEPSTKSS). Residues 673–714 (ELKIIRAKQRKQQEDRERRKKMKEEKKRLEELAKKRELTESV) adopt a coiled-coil conformation. A compositionally biased stretch (basic and acidic residues) spans 683-704 (KQQEDRERRKKMKEEKKRLEEL). The span at 769–796 (PQAPQAPQTSQASIQPQQQQQQQQQQQP) shows a compositional bias: low complexity.

As to quaternary structure, component of the ISW1B complex, which at least consists of ISW1, IOC2 and IOC4.

It is found in the nucleus. Its function is as follows. Functions as a component of the ISW1B complex, which acts in remodeling the chromatin by catalyzing an ATP-dependent alteration in the structure of nucleosomal DNA. The ISW1B complex acts within coding regions to control the amount of RNA polymerase II released into productive elongation and to coordinate elongation with termination and pre-mRNA processing. This is ISWI one complex protein 2 (IOC2) from Saccharomyces cerevisiae (strain ATCC 204508 / S288c) (Baker's yeast).